The sequence spans 155 residues: Ribosomal RNA large subunit methyltransferase H (155 aa).

S-adenosyl-L-methionine-binding positions include L73, G104, and 123–128 (LSPLTL).

Belongs to the RNA methyltransferase RlmH family. As to quaternary structure, homodimer.

It localises to the cytoplasm. The catalysed reaction is pseudouridine(1915) in 23S rRNA + S-adenosyl-L-methionine = N(3)-methylpseudouridine(1915) in 23S rRNA + S-adenosyl-L-homocysteine + H(+). Its function is as follows. Specifically methylates the pseudouridine at position 1915 (m3Psi1915) in 23S rRNA. This chain is Ribosomal RNA large subunit methyltransferase H, found in Pseudomonas aeruginosa (strain LESB58).